A 485-amino-acid chain; its full sequence is Bindin (485 aa).

A signal peptide spans 1–20; it reads MGFHQISVIIVVLALASARA. A propeptide spanning residues 21 to 247 is cleaved from the precursor; sequence ADEFPSHTDT…DSERGARKKR (227 aa). 3 disordered regions span residues 157-195, 219-273, and 305-331; these read GETRKRRGADDNDGDDVSKRASPRKGDEPAGHKLKDLAP, ISGH…PAQQ, and GGGQFGAFSPGEAEADNADYDEYSDSL. Positions 172–192 are enriched in basic and acidic residues; it reads DVSKRASPRKGDEPAGHKLKD. Residues 250–264 show a composition bias toward polar residues; sequence NQGNYPQAMNPQSRG. The segment covering 317–331 has biased composition (acidic residues); the sequence is AEADNADYDEYSDSL. The segment at 371-379 is fucose-binding domain; sequence LRHLRHHSN. Positions 459-485 are disordered; that stretch reads QQGMGGVPQRMGGQPQGNAYNQGYRQG. Low complexity predominate over residues 465–475; that stretch reads VPQRMGGQPQG. Residues 476–485 show a composition bias toward polar residues; sequence NAYNQGYRQG.

It belongs to the bindin family.

The protein localises to the cytoplasmic vesicle. The protein resides in the secretory vesicle. It localises to the acrosome lumen. Its function is as follows. Species-specific sea urchin sperm protein required for adhesion of sperm to the egg surface during fertilization. Bindin coats the acrosomal process after it is externalized by the acrosome reaction. It binds to sulfated, fucose-containing polysaccharides on the vitelline layer receptor proteoglycans which cover the egg plasma membrane. In Mesocentrotus franciscanus (Giant red sea urchin), this protein is Bindin.